A 342-amino-acid polypeptide reads, in one-letter code: tRNA N6-adenosine threonylcarbamoyltransferase (342 aa).

Fe cation contacts are provided by histidine 111 and histidine 115. Substrate is bound by residues 134–138 (LVSGG), aspartate 167, glycine 180, and asparagine 275. Aspartate 303 provides a ligand contact to Fe cation.

This sequence belongs to the KAE1 / TsaD family. It depends on Fe(2+) as a cofactor.

The protein resides in the cytoplasm. It carries out the reaction L-threonylcarbamoyladenylate + adenosine(37) in tRNA = N(6)-L-threonylcarbamoyladenosine(37) in tRNA + AMP + H(+). Functionally, required for the formation of a threonylcarbamoyl group on adenosine at position 37 (t(6)A37) in tRNAs that read codons beginning with adenine. Is involved in the transfer of the threonylcarbamoyl moiety of threonylcarbamoyl-AMP (TC-AMP) to the N6 group of A37, together with TsaE and TsaB. TsaD likely plays a direct catalytic role in this reaction. In Paraburkholderia xenovorans (strain LB400), this protein is tRNA N6-adenosine threonylcarbamoyltransferase.